A 313-amino-acid polypeptide reads, in one-letter code: Ribosomal RNA small subunit methyltransferase H (313 aa).

S-adenosyl-L-methionine-binding positions include 34–36 (GGH), aspartate 54, phenylalanine 81, aspartate 102, and glutamine 109. A disordered region spans residues 289–313 (IAGPEETDRNPRARSAKLRAAEKLG).

This sequence belongs to the methyltransferase superfamily. RsmH family.

It localises to the cytoplasm. The enzyme catalyses cytidine(1402) in 16S rRNA + S-adenosyl-L-methionine = N(4)-methylcytidine(1402) in 16S rRNA + S-adenosyl-L-homocysteine + H(+). Functionally, specifically methylates the N4 position of cytidine in position 1402 (C1402) of 16S rRNA. This chain is Ribosomal RNA small subunit methyltransferase H, found in Trichlorobacter lovleyi (strain ATCC BAA-1151 / DSM 17278 / SZ) (Geobacter lovleyi).